The chain runs to 232 residues: Izumo sperm-egg fusion protein 4 (232 aa).

The first 15 residues, 1-15 (MALLLCLVCLTAALA), serve as a signal peptide directing secretion. Residues N24 and N219 are each glycosylated (N-linked (GlcNAc...) asparagine).

This sequence belongs to the Izumo family. In terms of tissue distribution, detected in sperm.

It localises to the secreted. The chain is Izumo sperm-egg fusion protein 4 (IZUMO4) from Homo sapiens (Human).